Reading from the N-terminus, the 109-residue chain is Cell division suppressor protein YneA (109 aa).

Positions 39 to 90 (SEVDVNEGDSIWALADQYAAKSDMAKADFVSWVEKENNLTDGHVKAGDYVVI) constitute a LysM domain.

The protein belongs to the YneA family.

The protein resides in the cytoplasm. Inhibits cell division during the SOS response. Affects a later stage of the cell division protein assembly, after the assembly of the Z ring, by probably suppressing recruitment of FtsL and/or DivIC to the division machinery. In Listeria innocua serovar 6a (strain ATCC BAA-680 / CLIP 11262), this protein is Cell division suppressor protein YneA.